The following is a 403-amino-acid chain: 8-amino-7-oxononanoate synthase (403 aa).

Arginine 25 serves as a coordination point for substrate. Pyridoxal 5'-phosphate is bound at residue 112–113 (GY). Residue histidine 137 participates in substrate binding. Pyridoxal 5'-phosphate contacts are provided by serine 182, histidine 210, and threonine 239. Lysine 242 is subject to N6-(pyridoxal phosphate)lysine. Residue threonine 358 participates in substrate binding.

Belongs to the class-II pyridoxal-phosphate-dependent aminotransferase family. BioF subfamily. In terms of assembly, homodimer. Requires pyridoxal 5'-phosphate as cofactor.

It catalyses the reaction 6-carboxyhexanoyl-[ACP] + L-alanine + H(+) = (8S)-8-amino-7-oxononanoate + holo-[ACP] + CO2. The protein operates within cofactor biosynthesis; biotin biosynthesis. Functionally, catalyzes the decarboxylative condensation of pimeloyl-[acyl-carrier protein] and L-alanine to produce 8-amino-7-oxononanoate (AON), [acyl-carrier protein], and carbon dioxide. This chain is 8-amino-7-oxononanoate synthase, found in Marinomonas sp. (strain MWYL1).